A 447-amino-acid chain; its full sequence is Probable ethanolamine kinase B (447 aa).

Low complexity predominate over residues 178 to 208; that stretch reads STTISTSTSTSTSTSSTSPSTSPSLENSTLS. The interval 178–217 is disordered; sequence STTISTSTSTSTSTSSTSPSTSPSLENSTLSPRNMNTQTS.

The protein belongs to the choline/ethanolamine kinase family.

The protein resides in the cytoplasm. It catalyses the reaction ethanolamine + ATP = phosphoethanolamine + ADP + H(+). It participates in phospholipid metabolism; phosphatidylethanolamine biosynthesis; phosphatidylethanolamine from ethanolamine: step 1/3. Its function is as follows. Highly specific for ethanolamine phosphorylation. May be a rate-controlling step in phosphatidylethanolamine biosynthesis. This Dictyostelium discoideum (Social amoeba) protein is Probable ethanolamine kinase B (etnkB).